Reading from the N-terminus, the 100-residue chain is Protein RnfH (100 aa).

Belongs to the UPF0125 (RnfH) family.

In Pseudomonas paraeruginosa (strain DSM 24068 / PA7) (Pseudomonas aeruginosa (strain PA7)), this protein is Protein RnfH.